The chain runs to 307 residues: Probable rRNA-processing protein EBP2 homolog (307 aa).

3 disordered regions span residues 1-22 (MSDF…SDAE), 189-208 (QRKM…EAEK), and 236-307 (ESKQ…KGRK). Positions 205-252 (EAEKKDMLDKLKKFRKGKLKNLDFLEDAKALESKQKQSAENRKKRNKK) form a coiled coil. A compositionally biased stretch (basic and acidic residues) spans 236–245 (ESKQKQSAEN). Basic residues-rich tracts occupy residues 246–266 (RKKR…KRNT) and 294–307 (RLGK…KGRK).

The protein belongs to the EBP2 family.

The protein localises to the nucleus. It is found in the nucleolus. Required for the processing of the 27S pre-rRNA. This chain is Probable rRNA-processing protein EBP2 homolog, found in Drosophila melanogaster (Fruit fly).